Consider the following 175-residue polypeptide: Zinc metalloproteinase-disintegrin-like catroriarin (175 aa).

A Disintegrin domain is found at 1 to 63 (NPCCDAATCK…ECPADVFHKN (63 aa)). 9 cysteine pairs are disulfide-bonded: cysteine 3/cysteine 26, cysteine 17/cysteine 23, cysteine 22/cysteine 48, cysteine 35/cysteine 55, cysteine 42/cysteine 74, cysteine 67/cysteine 79, cysteine 101/cysteine 147, cysteine 114/cysteine 124, and cysteine 131/cysteine 171. The D/ECD-tripeptide motif lies at 41–43 (ECD). Residues aspartate 43, proline 44, glutamate 46, aspartate 58, and valine 59 each coordinate Ca(2+).

The protein belongs to the venom metalloproteinase (M12B) family. P-III subfamily. P-IIIa sub-subfamily. As to quaternary structure, monomer. Zn(2+) is required as a cofactor. In terms of processing, glycosylated. Expressed by the venom gland.

The protein resides in the secreted. Snake venom metalloproteinase that impairs hemostasis in the envenomed animal. This is Zinc metalloproteinase-disintegrin-like catroriarin from Crotalus atrox (Western diamondback rattlesnake).